The following is an 872-amino-acid chain: Cellulose synthase catalytic subunit [UDP-forming] (872 aa).

Transmembrane regions (helical) follow at residues 30–50, 151–171, 173–193, and 230–250; these read SAFSATLGCFWMILAWIFIPL, ILGIIVTFSLILALICVTQPF, PLAQFIFLMLLWGVALIVRRM, and LVCGLILLFAETYAWIVLVLG. The catalytic subdomain A stretch occupies residues 271 to 364; that stretch reads LWPSVDIFVP…FVSIFDCDHV (94 aa). D313 is a catalytic residue. Substrate is bound by residues D360 and D362. Residues 441 to 501 form a catalytic subdomain B region; sequence KPLDEIGGIA…GQRIRWARGM (61 aa). Residue D457 is part of the active site. 5 helical membrane passes run 525–545, 547–567, 592–612, 640–660, and 668–688; these read VNAMFHFLSGIPRLIFLTAPL, FLLLHAYIIYAPALMIALFVL, IYETVLAWYIAPPTLVALINP, IFLVLLNLVGVAVGIWRYFYG, and VVVSMVWVFYNLIVLGGAVAV. One can recognise a PilZ domain in the interval 694–790; sequence QVRRSHRVEM…QHIDFVQCTF (97 aa). Residues 833-853 traverse the membrane as a helical segment; sequence SVKGIFRVLTSLVSWVVSFIP.

Belongs to the glycosyltransferase 2 family. Mg(2+) is required as a cofactor.

The protein localises to the cell inner membrane. It carries out the reaction [(1-&gt;4)-beta-D-glucosyl](n) + UDP-alpha-D-glucose = [(1-&gt;4)-beta-D-glucosyl](n+1) + UDP + H(+). It participates in glycan metabolism; bacterial cellulose biosynthesis. Activated by bis-(3'-5') cyclic diguanylic acid (c-di-GMP). In terms of biological role, catalytic subunit of cellulose synthase. It polymerizes uridine 5'-diphosphate glucose to cellulose, which is produced as an extracellular component for mechanical and chemical protection at the onset of the stationary phase, when the cells exhibit multicellular behavior (rdar morphotype). Coexpression of cellulose and thin aggregative fimbriae (curli fimbrae or fibers) leads to a hydrophobic network with tightly packed cells embedded in a highly inert matrix that confers cohesion, elasticity and tissue-like properties to colonies. This chain is Cellulose synthase catalytic subunit [UDP-forming] (bcsA), found in Escherichia coli (strain K12).